We begin with the raw amino-acid sequence, 356 residues long: Holliday junction branch migration complex subunit RuvB (356 aa).

The large ATPase domain (RuvB-L) stretch occupies residues 4 to 191 (TDKLATEQRI…FGIVARLEFY (188 aa)). ATP-binding positions include leucine 30, arginine 31, glycine 72, lysine 75, threonine 76, threonine 77, 138-140 (EDY), arginine 181, tyrosine 191, and arginine 228. Residue threonine 76 coordinates Mg(2+). The interval 192 to 262 (DAEQLSRIVR…VADAALAMLD (71 aa)) is small ATPAse domain (RuvB-S). A head domain (RuvB-H) region spans residues 265–356 (PVGFDLMDRK…RGEWDTPDGK (92 aa)). DNA contacts are provided by arginine 301, arginine 320, and arginine 325.

Belongs to the RuvB family. As to quaternary structure, homohexamer. Forms an RuvA(8)-RuvB(12)-Holliday junction (HJ) complex. HJ DNA is sandwiched between 2 RuvA tetramers; dsDNA enters through RuvA and exits via RuvB. An RuvB hexamer assembles on each DNA strand where it exits the tetramer. Each RuvB hexamer is contacted by two RuvA subunits (via domain III) on 2 adjacent RuvB subunits; this complex drives branch migration. In the full resolvosome a probable DNA-RuvA(4)-RuvB(12)-RuvC(2) complex forms which resolves the HJ.

The protein resides in the cytoplasm. It carries out the reaction ATP + H2O = ADP + phosphate + H(+). In terms of biological role, the RuvA-RuvB-RuvC complex processes Holliday junction (HJ) DNA during genetic recombination and DNA repair, while the RuvA-RuvB complex plays an important role in the rescue of blocked DNA replication forks via replication fork reversal (RFR). RuvA specifically binds to HJ cruciform DNA, conferring on it an open structure. The RuvB hexamer acts as an ATP-dependent pump, pulling dsDNA into and through the RuvAB complex. RuvB forms 2 homohexamers on either side of HJ DNA bound by 1 or 2 RuvA tetramers; 4 subunits per hexamer contact DNA at a time. Coordinated motions by a converter formed by DNA-disengaged RuvB subunits stimulates ATP hydrolysis and nucleotide exchange. Immobilization of the converter enables RuvB to convert the ATP-contained energy into a lever motion, pulling 2 nucleotides of DNA out of the RuvA tetramer per ATP hydrolyzed, thus driving DNA branch migration. The RuvB motors rotate together with the DNA substrate, which together with the progressing nucleotide cycle form the mechanistic basis for DNA recombination by continuous HJ branch migration. Branch migration allows RuvC to scan DNA until it finds its consensus sequence, where it cleaves and resolves cruciform DNA. This Burkholderia lata (strain ATCC 17760 / DSM 23089 / LMG 22485 / NCIMB 9086 / R18194 / 383) protein is Holliday junction branch migration complex subunit RuvB.